Here is a 70-residue protein sequence, read N- to C-terminus: NAD(P)H-quinone oxidoreductase subunit O (70 aa).

Belongs to the complex I NdhO subunit family. As to quaternary structure, NDH-1 can be composed of about 15 different subunits; different subcomplexes with different compositions have been identified which probably have different functions.

The protein localises to the cellular thylakoid membrane. It carries out the reaction a plastoquinone + NADH + (n+1) H(+)(in) = a plastoquinol + NAD(+) + n H(+)(out). The catalysed reaction is a plastoquinone + NADPH + (n+1) H(+)(in) = a plastoquinol + NADP(+) + n H(+)(out). In terms of biological role, NDH-1 shuttles electrons from an unknown electron donor, via FMN and iron-sulfur (Fe-S) centers, to quinones in the respiratory and/or the photosynthetic chain. The immediate electron acceptor for the enzyme in this species is believed to be plastoquinone. Couples the redox reaction to proton translocation, and thus conserves the redox energy in a proton gradient. Cyanobacterial NDH-1 also plays a role in inorganic carbon-concentration. This chain is NAD(P)H-quinone oxidoreductase subunit O, found in Nostoc sp. (strain PCC 7120 / SAG 25.82 / UTEX 2576).